The sequence spans 119 residues: Large ribosomal subunit protein uL18 (119 aa).

Belongs to the universal ribosomal protein uL18 family. Part of the 50S ribosomal subunit; part of the 5S rRNA/L5/L18/L25 subcomplex. Contacts the 5S and 23S rRNAs.

This is one of the proteins that bind and probably mediate the attachment of the 5S RNA into the large ribosomal subunit, where it forms part of the central protuberance. In Chlorobium phaeovibrioides (strain DSM 265 / 1930) (Prosthecochloris vibrioformis (strain DSM 265)), this protein is Large ribosomal subunit protein uL18.